A 118-amino-acid polypeptide reads, in one-letter code: NADH-quinone oxidoreductase subunit A (118 aa).

Transmembrane regions (helical) follow at residues 6–26 (LIIGIFLIASFIFGMVVLLTA), 61–81 (FMYGLVFLLFDVETVFLLPWA), and 87–107 (LGLFALFEMVIFIGILIIGLW).

It belongs to the complex I subunit 3 family. In terms of assembly, NDH-1 is composed of 14 different subunits. Subunits NuoA, H, J, K, L, M, N constitute the membrane sector of the complex.

The protein localises to the cell membrane. It catalyses the reaction a quinone + NADH + 5 H(+)(in) = a quinol + NAD(+) + 4 H(+)(out). In terms of biological role, NDH-1 shuttles electrons from NADH, via FMN and iron-sulfur (Fe-S) centers, to quinones in the respiratory chain. The immediate electron acceptor for the enzyme in this species is believed to be a menaquinone. Couples the redox reaction to proton translocation (for every two electrons transferred, four hydrogen ions are translocated across the cytoplasmic membrane), and thus conserves the redox energy in a proton gradient. In Clostridium beijerinckii (strain ATCC 51743 / NCIMB 8052) (Clostridium acetobutylicum), this protein is NADH-quinone oxidoreductase subunit A.